We begin with the raw amino-acid sequence, 136 residues long: Large ribosomal subunit protein uL16 (136 aa).

Belongs to the universal ribosomal protein uL16 family. In terms of assembly, part of the 50S ribosomal subunit.

Its function is as follows. Binds 23S rRNA and is also seen to make contacts with the A and possibly P site tRNAs. This Vibrio campbellii (strain ATCC BAA-1116) protein is Large ribosomal subunit protein uL16.